The primary structure comprises 1088 residues: uncharacterized protein (1088 aa).

Ser-299 is modified (phosphoserine). Residues 954–980 (PRSSVATTASTESSEQGPKMKRMARRK) form a disordered region. Over residues 956 to 968 (SSVATTASTESSE) the composition is skewed to low complexity. At Ser-984 the chain carries Phosphoserine. Thr-1013 is modified (phosphothreonine). The segment at 1063–1088 (MKVTDKAKDEDIDPMDPMSPLNKDVS) is disordered. Phosphoserine is present on Ser-1081.

This is an uncharacterized protein from Saccharomyces cerevisiae (strain ATCC 204508 / S288c) (Baker's yeast).